Here is a 197-residue protein sequence, read N- to C-terminus: Imidazoleglycerol-phosphate dehydratase (197 aa).

This sequence belongs to the imidazoleglycerol-phosphate dehydratase family.

It is found in the cytoplasm. The catalysed reaction is D-erythro-1-(imidazol-4-yl)glycerol 3-phosphate = 3-(imidazol-4-yl)-2-oxopropyl phosphate + H2O. It functions in the pathway amino-acid biosynthesis; L-histidine biosynthesis; L-histidine from 5-phospho-alpha-D-ribose 1-diphosphate: step 6/9. In Rhodopseudomonas palustris (strain TIE-1), this protein is Imidazoleglycerol-phosphate dehydratase.